We begin with the raw amino-acid sequence, 486 residues long: UDP-N-acetylmuramate--L-alanine ligase (486 aa).

123–129 (GTHGKTT) contributes to the ATP binding site.

Belongs to the MurCDEF family.

The protein localises to the cytoplasm. It catalyses the reaction UDP-N-acetyl-alpha-D-muramate + L-alanine + ATP = UDP-N-acetyl-alpha-D-muramoyl-L-alanine + ADP + phosphate + H(+). The protein operates within cell wall biogenesis; peptidoglycan biosynthesis. In terms of biological role, cell wall formation. This chain is UDP-N-acetylmuramate--L-alanine ligase, found in Pseudomonas fluorescens (strain Pf0-1).